The sequence spans 168 residues: UPF0478 protein SH1183 (168 aa).

A helical membrane pass occupies residues 7-27 (IAGIIAAIAFLVLCIGIVVVL). Residues 144 to 168 (YRNTSVGNDANHSNENYTTNVEKNF) are disordered.

This sequence belongs to the UPF0478 family.

It is found in the cell membrane. The protein is UPF0478 protein SH1183 of Staphylococcus haemolyticus (strain JCSC1435).